Consider the following 340-residue polypeptide: NADH-quinone oxidoreductase subunit H (340 aa).

8 consecutive transmembrane segments (helical) span residues 4-24, 78-98, 113-133, 151-171, 184-204, 244-264, 273-293, and 316-336; these read TIGI…PLLL, YLFV…WAVI, VLYL…AGWA, VSYE…AGSM, MLHW…IAGI, SMIL…LSPF, IFFV…FLFV, and VLIP…VAHV.

This sequence belongs to the complex I subunit 1 family. NDH-1 is composed of 14 different subunits. Subunits NuoA, H, J, K, L, M, N constitute the membrane sector of the complex.

It localises to the cell inner membrane. It catalyses the reaction a quinone + NADH + 5 H(+)(in) = a quinol + NAD(+) + 4 H(+)(out). Its function is as follows. NDH-1 shuttles electrons from NADH, via FMN and iron-sulfur (Fe-S) centers, to quinones in the respiratory chain. The immediate electron acceptor for the enzyme in this species is believed to be ubiquinone. Couples the redox reaction to proton translocation (for every two electrons transferred, four hydrogen ions are translocated across the cytoplasmic membrane), and thus conserves the redox energy in a proton gradient. This subunit may bind ubiquinone. In Legionella pneumophila (strain Paris), this protein is NADH-quinone oxidoreductase subunit H.